We begin with the raw amino-acid sequence, 339 residues long: MGTITVVINEGPILLIRALHRATTNKKMFRSTVWRRFASTGEIAKAKLDEFLIYHKTDAKLKPFIYRPKNAQILLTKDIRDPKTREPLQPRPPVKPLSKQTLNDFIYSVEPNSTELLDWFKEWTGTSIRKRAIWTYISPIHVQKMLTASFFKIGKYAHMVGLLYGIEHKFLKAQNPSVFDIEHFFNTNIMCALHRNRLKDYKDAEIAQRKLQVAWKKVLNRKNNTGLANILVATLGRQIGFTPELTGLQPVDISLPDIPNSSSGAELKDLLSKYEGIYLIARTLLDIDQHNAQYLELQEFIRQYQNALSESSDPYDTHLKALGLLETPPPQESTEKEEK.

A mitochondrion-targeting transit peptide spans 1–37; the sequence is MGTITVVINEGPILLIRALHRATTNKKMFRSTVWRRF.

The protein belongs to the mitochondrion-specific ribosomal protein mS27 family. In terms of assembly, component of the mitochondrial small ribosomal subunit (mt-SSU). Mature yeast 74S mitochondrial ribosomes consist of a small (37S) and a large (54S) subunit. The 37S small subunit contains a 15S ribosomal RNA (15S mt-rRNA) and 34 different proteins. The 54S large subunit contains a 21S rRNA (21S mt-rRNA) and 46 different proteins.

Its subcellular location is the mitochondrion. Its function is as follows. Component of the mitochondrial ribosome (mitoribosome), a dedicated translation machinery responsible for the synthesis of mitochondrial genome-encoded proteins, including at least some of the essential transmembrane subunits of the mitochondrial respiratory chain. The mitoribosomes are attached to the mitochondrial inner membrane and translation products are cotranslationally integrated into the membrane. The sequence is that of Small ribosomal subunit protein mS27 (MRP13) from Saccharomyces cerevisiae (strain ATCC 204508 / S288c) (Baker's yeast).